The chain runs to 104 residues: NPPAIFKSYCEIIVTYFPFDEQNCSMKLGTWTYDGTVVAIYPEGPRPDLSNYMQSGEWTLKDYRGFWHSVNYSCCLDTPYLDITYHFILLRLPLYFIVNVIIPC.

Residues Asn1–Cys104 are Extracellular-facing. Disulfide bonds link Cys10–Cys24 and Cys74–Cys75. Residue Asn23 is glycosylated (N-linked (GlcNAc...) asparagine).

This sequence belongs to the ligand-gated ion channel (TC 1.A.9) family. Acetylcholine receptor (TC 1.A.9.1) subfamily. Alpha-1/CHRNA1 sub-subfamily. As to quaternary structure, one of the alpha chains that assemble within the acetylcholine receptor, a pentamer of two alpha chains, a beta, a delta, and a gamma or epsilon chains.

The protein resides in the postsynaptic cell membrane. It localises to the cell membrane. The enzyme catalyses K(+)(in) = K(+)(out). It carries out the reaction Na(+)(in) = Na(+)(out). Upon acetylcholine binding, the AChR responds by an extensive change in conformation that affects all subunits and leads to opening of an ion-conducting channel across the plasma membrane. The chain is Acetylcholine receptor subunit alpha (CHRNA1) from Naja naja (Indian cobra).